Reading from the N-terminus, the 521-residue chain is CDP-diacylglycerol--glycerol-3-phosphate 3-phosphatidyltransferase (521 aa).

A91–S98 contacts ATP. PLD phosphodiesterase domains are found at residues G177–Y203 and N419–A457. Residues H182, K184, and D189 contribute to the active site.

Belongs to the CDP-alcohol phosphatidyltransferase class-II family.

Its subcellular location is the mitochondrion. It carries out the reaction a CDP-1,2-diacyl-sn-glycerol + sn-glycerol 3-phosphate = a 1,2-diacyl-sn-glycero-3-phospho-(1'-sn-glycero-3'-phosphate) + CMP + H(+). Its pathway is phospholipid metabolism; phosphatidylglycerol biosynthesis; phosphatidylglycerol from CDP-diacylglycerol: step 1/2. Its function is as follows. Essential for the viability of mitochondrial petite mutant. Catalyzes the committed step to the synthesis of the acidic phospholipids. In Saccharomyces cerevisiae (strain ATCC 204508 / S288c) (Baker's yeast), this protein is CDP-diacylglycerol--glycerol-3-phosphate 3-phosphatidyltransferase (PGS1).